Here is a 385-residue protein sequence, read N- to C-terminus: Leucine aminopeptidase 1 (385 aa).

The N-terminal stretch at 1–19 (MKFPSFLSLGIAASTTALA) is a signal peptide. Residues 20-87 (ALPDQKPIGD…FPRAFAKTAV (68 aa)) constitute a propeptide that is removed on maturation. The N-linked (GlcNAc...) asparagine glycan is linked to N177. Residues H185 and D204 each contribute to the Zn(2+) site. N229 carries N-linked (GlcNAc...) asparagine glycosylation. Residues E243 and D270 each coordinate Zn(2+). C319 and C323 are oxidised to a cystine. H352 lines the Zn(2+) pocket.

Belongs to the peptidase M28 family. M28E subfamily. As to quaternary structure, monomer. The cofactor is Zn(2+).

It localises to the secreted. Extracellular aminopeptidase that allows assimilation of proteinaceous substrates. The polypeptide is Leucine aminopeptidase 1 (LAP1) (Ajellomyces dermatitidis (strain ER-3 / ATCC MYA-2586) (Blastomyces dermatitidis)).